Consider the following 437-residue polypeptide: Protein PhoH2 (437 aa).

The region spanning Arg-7 to Val-134 is the PINc domain.

The protein in the N-terminal section; belongs to the PINc/VapC protein family. It in the C-terminal section; belongs to the PhoH family. As to quaternary structure, interacts with antitoxin PhoAT. Mg(2+) is required as a cofactor.

It catalyses the reaction n ATP + n H2O + wound RNA = n ADP + n phosphate + unwound RNA.. The catalysed reaction is ATP + H2O = ADP + phosphate + H(+). It carries out the reaction GTP + H2O = GDP + phosphate + H(+). Toxic component of a type II toxin-antitoxin (TA) system. The possible cognate antitoxin is PhoAT; the toxin gene can be expressed in the absence of the antitoxin gene in an endogenous mc(2)155 double deletion. Unwinds and/or cleaves 5'-tailed RNA in vitro that starts with 5'-AC, the reaction requires hydrolyzable ATP; double-stranded (ds)RNA and dsDNA are not unwound or cleaved. Has ATPase and GTPase activities. The protein is Protein PhoH2 of Mycolicibacterium smegmatis (strain ATCC 700084 / mc(2)155) (Mycobacterium smegmatis).